The following is a 634-amino-acid chain: Ras and EF-hand domain-containing protein homolog (634 aa).

EF-hand domains follow at residues 5-33 (DVENLFSLCDSESKGFLTMEDLKKVCPQL) and 33-68 (LDDNDLRFIFNELDRDGSGKIEKMEFLQGFQETVQH). 5 residues coordinate Ca(2+): D46, D48, S50, K52, and E57. A coiled-coil region spans residues 169 to 310 (LSEKKHENER…RADFDQKQDE (142 aa)). Disordered stretches follow at residues 216–237 (ERERLTKEKEEMRERMSEEMSE) and 308–328 (QDELSARRDQASHATEESESV). GTP is bound by residues 449-454 (AVGKSS), 552-555 (NKVD), and 585-586 (AL). The propeptide at 632–634 (RGS) is removed in mature form.

Belongs to the small GTPase superfamily. Rab family. As to quaternary structure, homodimer.

The protein localises to the cytoplasm. Its subcellular location is the perinuclear region. Functionally, binds GTP and GDP. Plays a role in uterine seam cell development. The chain is Ras and EF-hand domain-containing protein homolog from Caenorhabditis briggsae.